Here is a 152-residue protein sequence, read N- to C-terminus: UPF0225 protein Ent638_2310 (152 aa).

The protein belongs to the UPF0225 family.

The protein is UPF0225 protein Ent638_2310 of Enterobacter sp. (strain 638).